Reading from the N-terminus, the 148-residue chain is uncharacterized protein (148 aa).

The 62-residue stretch at 4-65 (LDKVDIQLVK…IPDLDKLGYM (62 aa)) folds into the HTH asnC-type domain. A DNA-binding region (H-T-H motif) is located at residues 23-42 (YRELAELMNTTRQRIARRIT).

This is an uncharacterized protein from Pyrococcus abyssi (strain GE5 / Orsay).